A 389-amino-acid chain; its full sequence is 26S proteasome non-ATPase regulatory subunit 6 (389 aa).

The PCI domain occupies 193 to 361 (NFKKAASLFL…CVLETNRPDA (169 aa)).

Belongs to the proteasome subunit S10 family.

Acts as a regulatory subunit of the 26S proteasome which is involved in the ATP-dependent degradation of ubiquitinated proteins. The polypeptide is 26S proteasome non-ATPase regulatory subunit 6 (RPN7) (Oryza sativa subsp. japonica (Rice)).